A 201-amino-acid polypeptide reads, in one-letter code: MPIVSSAASIQRHPGIQDVAAPTELTSIPSVGEKLGSGSQKDVYHSRQDPRQCICLIRPDTTGIISGNEYAAKELKMTKHLKDLGFPVVDAYALVKYDNKVGIAKDYIHHALDSEDVIHNRKHIPTDMAFNKNVMKDCDEIISRLRTHSLHIEDLQFLIDGYGRVRINDPRDVIRSSPEKSIAKVRELRAIALNNLLDDSD.

ATP is bound by residues S39, Q40, K41, D106, I108, and D113. D154 is a catalytic residue. An ATP-binding site is contributed by Q156.

The protein belongs to the HopBF1 family.

The protein resides in the secreted. It is found in the host cell. It carries out the reaction L-seryl-[protein] + ATP = O-phospho-L-seryl-[protein] + ADP + H(+). In terms of biological role, effector protein that targets and inactivates the plant molecular chaperone HSP90 during infection. HopBF1 is recognized by HSP90 as a host client. As a result, HopBF1 phosphorylates HSP90, leading to the inactivation of the HSP90 ATPase activity and chaperone function. Phosphorylation of HSP90 prevents activation of immune receptors that trigger the hypersensitive response in plants. HopBF1 is sufficient to cause severe disease symptoms in plants infected with P.syringae. In vitro, can phosphorylate the recombinant yeast HSP82 (HSP90) on Ser-99, Triticum aestivum (wheat) HSP90 and human HSP 90-beta, but not the prokaryotic HSP90 orthologs, HtpG from E.coli and P.syringae. Does not act on generic protein kinase substrates such as casein and myelin basic protein, as well as the yeast HSP70s and Bip chaperones. The chain is Type III effector protein HopBF1 from Pseudomonas syringae pv. syringae (strain FF5).